The sequence spans 93 residues: Small ribosomal subunit protein uS19 (93 aa).

This sequence belongs to the universal ribosomal protein uS19 family.

Protein S19 forms a complex with S13 that binds strongly to the 16S ribosomal RNA. The sequence is that of Small ribosomal subunit protein uS19 from Caldanaerobacter subterraneus subsp. tengcongensis (strain DSM 15242 / JCM 11007 / NBRC 100824 / MB4) (Thermoanaerobacter tengcongensis).